The following is a 301-amino-acid chain: Probable alpha-L-glutamate ligase (301 aa).

In terms of domain architecture, ATP-grasp spans L104–E287. ATP contacts are provided by residues K141, E178–Y179, D187, and R211–N213. Residues D248, E260, and N262 each contribute to the Mg(2+) site. The Mn(2+) site is built by D248, E260, and N262.

The protein belongs to the RimK family. It depends on Mg(2+) as a cofactor. The cofactor is Mn(2+).

The polypeptide is Probable alpha-L-glutamate ligase (Stutzerimonas stutzeri (strain A1501) (Pseudomonas stutzeri)).